We begin with the raw amino-acid sequence, 96 residues long: Putative septation protein SpoVG (96 aa).

This sequence belongs to the SpoVG family.

Its function is as follows. Could be involved in septation. This Borrelia hermsii (strain HS1 / DAH) protein is Putative septation protein SpoVG.